Consider the following 428-residue polypeptide: Enolase (428 aa).

Glutamine 162 contributes to the (2R)-2-phosphoglycerate binding site. The active-site Proton donor is glutamate 204. Residues aspartate 241, glutamate 283, and aspartate 310 each coordinate Mg(2+). (2R)-2-phosphoglycerate contacts are provided by lysine 335, arginine 364, serine 365, and lysine 386. Lysine 335 serves as the catalytic Proton acceptor.

The protein belongs to the enolase family. Mg(2+) is required as a cofactor.

It is found in the cytoplasm. It localises to the secreted. The protein localises to the cell surface. It carries out the reaction (2R)-2-phosphoglycerate = phosphoenolpyruvate + H2O. It functions in the pathway carbohydrate degradation; glycolysis; pyruvate from D-glyceraldehyde 3-phosphate: step 4/5. Catalyzes the reversible conversion of 2-phosphoglycerate (2-PG) into phosphoenolpyruvate (PEP). It is essential for the degradation of carbohydrates via glycolysis. The sequence is that of Enolase from Rhodococcus jostii (strain RHA1).